A 33-amino-acid polypeptide reads, in one-letter code: Photosystem II reaction center protein T (33 aa).

Residues 3–23 (ALVYTFLLVSTLGIIFFAIFF) form a helical membrane-spanning segment.

This sequence belongs to the PsbT family. PSII is composed of 1 copy each of membrane proteins PsbA, PsbB, PsbC, PsbD, PsbE, PsbF, PsbH, PsbI, PsbJ, PsbK, PsbL, PsbM, PsbT, PsbY, PsbZ, Psb30/Ycf12, at least 3 peripheral proteins of the oxygen-evolving complex and a large number of cofactors. It forms dimeric complexes.

It is found in the plastid. Its subcellular location is the chloroplast thylakoid membrane. Found at the monomer-monomer interface of the photosystem II (PS II) dimer, plays a role in assembly and dimerization of PSII. PSII is a light-driven water plastoquinone oxidoreductase, using light energy to abstract electrons from H(2)O, generating a proton gradient subsequently used for ATP formation. In Helianthus annuus (Common sunflower), this protein is Photosystem II reaction center protein T.